The sequence spans 367 residues: Phosphoribosylaminoimidazole-succinocarboxamide synthase (367 aa).

This sequence belongs to the SAICAR synthetase family.

The catalysed reaction is 5-amino-1-(5-phospho-D-ribosyl)imidazole-4-carboxylate + L-aspartate + ATP = (2S)-2-[5-amino-1-(5-phospho-beta-D-ribosyl)imidazole-4-carboxamido]succinate + ADP + phosphate + 2 H(+). Its pathway is purine metabolism; IMP biosynthesis via de novo pathway; 5-amino-1-(5-phospho-D-ribosyl)imidazole-4-carboxamide from 5-amino-1-(5-phospho-D-ribosyl)imidazole-4-carboxylate: step 1/2. This Vibrio parahaemolyticus serotype O3:K6 (strain RIMD 2210633) protein is Phosphoribosylaminoimidazole-succinocarboxamide synthase.